The chain runs to 86 residues: Small ribosomal subunit protein bS16 (86 aa).

Belongs to the bacterial ribosomal protein bS16 family.

This chain is Small ribosomal subunit protein bS16, found in Leptothrix cholodnii (strain ATCC 51168 / LMG 8142 / SP-6) (Leptothrix discophora (strain SP-6)).